The primary structure comprises 244 residues: MNLSQQNQHSNPITEAAKATFPYSVPMIAGFLFLGIAYGIYMKALGFGFLYPTLMALLIYAGSVEFIAAGALIAPFSPISVLLITLMISARQIFYGISMLEKYGIHIGKKRWYLITTLVDESFSLNYMAKIPPHLDKGWYMFFVSLYLHIYWVLGAAMGNLFGTVLPFNLKGVEFSMTALFLVIFAENWLKGKSHESSLLGLGIALVFLLIIGKEYFLIPTLIGIWLILTMRITKLETKLESLK.

6 consecutive transmembrane segments (helical) span residues 21 to 41 (FPYSVPMIAGFLFLGIAYGIY), 44 to 64 (ALGFGFLYPTLMALLIYAGSV), 66 to 86 (FIAAGALIAPFSPISVLLITL), 139 to 159 (WYMFFVSLYLHIYWVLGAAMG), 165 to 185 (VLPFNLKGVEFSMTALFLVIF), and 199 to 219 (LLGLGIALVFLLIIGKEYFLI).

This sequence belongs to the AzlC family.

It is found in the cell membrane. This is an uncharacterized protein from Haemophilus influenzae (strain ATCC 51907 / DSM 11121 / KW20 / Rd).